We begin with the raw amino-acid sequence, 240 residues long: Lactate utilization protein C (240 aa).

Belongs to the LutC/YkgG family.

Is involved in L-lactate degradation and allows cells to grow with lactate as the sole carbon source. The sequence is that of Lactate utilization protein C from Bacillus licheniformis (strain ATCC 14580 / DSM 13 / JCM 2505 / CCUG 7422 / NBRC 12200 / NCIMB 9375 / NCTC 10341 / NRRL NRS-1264 / Gibson 46).